The following is a 280-amino-acid chain: Pantothenate synthetase (280 aa).

30–37 provides a ligand contact to ATP; sequence MGYLHEGH. The Proton donor role is filled by His37. Gln61 contacts (R)-pantoate. Residue Gln61 coordinates beta-alanine. 147–150 serves as a coordination point for ATP; sequence GQKD. Gln153 is a binding site for (R)-pantoate. ATP-binding positions include Val176 and 184–187; that span reads MSSR.

It belongs to the pantothenate synthetase family. In terms of assembly, homodimer.

Its subcellular location is the cytoplasm. The enzyme catalyses (R)-pantoate + beta-alanine + ATP = (R)-pantothenate + AMP + diphosphate + H(+). It functions in the pathway cofactor biosynthesis; (R)-pantothenate biosynthesis; (R)-pantothenate from (R)-pantoate and beta-alanine: step 1/1. Catalyzes the condensation of pantoate with beta-alanine in an ATP-dependent reaction via a pantoyl-adenylate intermediate. The chain is Pantothenate synthetase from Thermotoga neapolitana.